Reading from the N-terminus, the 130-residue chain is Large ribosomal subunit protein bL17 (130 aa).

The protein belongs to the bacterial ribosomal protein bL17 family. As to quaternary structure, part of the 50S ribosomal subunit. Contacts protein L32.

The protein is Large ribosomal subunit protein bL17 of Azotobacter vinelandii (strain DJ / ATCC BAA-1303).